Reading from the N-terminus, the 130-residue chain is Protein ApaG (130 aa).

Positions 3–127 (SQTTRDIEVT…FSLDSPHEKP (125 aa)) constitute an ApaG domain.

This Paramagnetospirillum magneticum (strain ATCC 700264 / AMB-1) (Magnetospirillum magneticum) protein is Protein ApaG.